A 228-amino-acid chain; its full sequence is CD302 antigen (228 aa).

Residues 1–20 (MPHAALSSLVLLSLATAIFA) form the signal peptide. At 21-165 (DCPSSIWVQF…YDKKYLSDNH (145 aa)) the chain is on the extracellular side. Positions 30-149 (FQGSCYTFLQ…CEMSSVTGTL (120 aa)) constitute a C-type lectin domain. The N-linked (GlcNAc...) asparagine glycan is linked to asparagine 107. Cysteines 125 and 140 form a disulfide. The helical transmembrane segment at 166 to 186 (ILISTLVIASTVTLAVLGAVI) threads the bilayer. The Cytoplasmic segment spans residues 187–228 (WFLYRRSARSGFTSFSPAPQSPYSDGCALVVSEEDEYSVQLD).

The protein resides in the membrane. Its subcellular location is the cell projection. It localises to the filopodium. The protein localises to the cytoplasm. It is found in the cell cortex. The protein resides in the microvillus. In terms of biological role, potential multifunctional C-type lectin receptor that may play roles in endocytosis and phagocytosis as well as in cell adhesion and migration. The protein is CD302 antigen (Cd302) of Rattus norvegicus (Rat).